A 493-amino-acid chain; its full sequence is Alpha-amylase-related protein (493 aa).

The first 19 residues, 1–19 (MFKFALTLTLCLAGSLSLA), serve as a signal peptide directing secretion. At Gln20 the chain carries Pyrrolidone carboxylic acid. Residues Cys47 and Cys103 are joined by a disulfide bond. Ca(2+) is bound by residues Asn117, Gln168, and Asp177. Residues Cys156 and Cys170 are joined by a disulfide bond. Arg205 is a binding site for chloride. Catalysis depends on Asp207, which acts as the Nucleophile. His211 is a binding site for Ca(2+). Glu244 (proton donor) is an active-site residue. 2 residues coordinate chloride: Asn307 and Arg342. Intrachain disulfides connect Cys375–Cys381, Cys417–Cys440, and Cys447–Cys459.

It belongs to the glycosyl hydrolase 13 family. In terms of assembly, monomer. Ca(2+) is required as a cofactor. Chloride serves as cofactor.

The protein resides in the secreted. It catalyses the reaction Endohydrolysis of (1-&gt;4)-alpha-D-glucosidic linkages in polysaccharides containing three or more (1-&gt;4)-alpha-linked D-glucose units.. The sequence is that of Alpha-amylase-related protein (Amyrel) from Drosophila simulans (Fruit fly).